The sequence spans 137 residues: Large ribosomal subunit protein uL16 (137 aa).

A compositionally biased stretch (basic residues) spans 1–13 (MLQPKRRKYRKEQ). Positions 1–22 (MLQPKRRKYRKEQKGRNTGVAT) are disordered.

The protein belongs to the universal ribosomal protein uL16 family. As to quaternary structure, part of the 50S ribosomal subunit.

Functionally, binds 23S rRNA and is also seen to make contacts with the A and possibly P site tRNAs. In Polynucleobacter asymbioticus (strain DSM 18221 / CIP 109841 / QLW-P1DMWA-1) (Polynucleobacter necessarius subsp. asymbioticus), this protein is Large ribosomal subunit protein uL16.